The primary structure comprises 423 residues: MLWRNEITEFMDQLSKYSQEILKTFKQLRPSEYKQYNEFLTQVTPLLQKTPDKIPELVDHIFNYLDNVEKICELLVNASSIIISSKIREQVKHGMSFSYKADLDSLADILIQKQYVLMHLSKNIAAQYFNTCLNQGKSKLDLKAASVFYSSRPRTASSAELYRKMLYAYGSPQEINYYTEKARNKTLDVEESDSMAIIERTARHNLSLMHPLEAMGLTFGATNTDADPEDLKDKTVINLTLPQATESITYHLKSLMQLKKVSTASGLNTNILKAFDNIISTPVKKNKMASKLAPGMDVVFTSDNGKTFFTKNILSKNMLAGPKERVFAYNNLISNLNNSCFIQNHNDFLRQQDSWPFYDAHNFTNKFLMQPIFSGQTRPRLQGAMEAAHVETHLTAFLQSIQPSRPQDPSVLASPKLSALILN.

This sequence belongs to the asfivirus E423R family.

It is found in the virion. This is an uncharacterized protein from Ornithodoros (relapsing fever ticks).